Consider the following 428-residue polypeptide: GTPase Obg (428 aa).

The Obg domain occupies 1–158 (MFVDQVKIYV…RDVILELKVL (158 aa)). The region spanning 159–329 (ADVGLVGFPS…LLFEVANLIE (171 aa)) is the OBG-type G domain. Residues 165 to 172 (GFPSVGKS), 190 to 194 (FTTIV), 212 to 215 (DLPG), 282 to 285 (NKMD), and 310 to 312 (SAV) each bind GTP. Mg(2+) is bound by residues Ser172 and Thr192. Residues 350-428 (KFETEGVKFD…ILEYEFEFID (79 aa)) enclose the OCT domain.

Belongs to the TRAFAC class OBG-HflX-like GTPase superfamily. OBG GTPase family. In terms of assembly, monomer. Requires Mg(2+) as cofactor.

The protein localises to the cytoplasm. An essential GTPase which binds GTP, GDP and possibly (p)ppGpp with moderate affinity, with high nucleotide exchange rates and a fairly low GTP hydrolysis rate. Plays a role in control of the cell cycle, stress response, ribosome biogenesis and in those bacteria that undergo differentiation, in morphogenesis control. The sequence is that of GTPase Obg from Bacillus thuringiensis (strain Al Hakam).